The primary structure comprises 506 residues: Mitogen-activated protein kinase 13 (506 aa).

The 292-residue stretch at 13–304 (YQIQEVVGKG…AEEALADPYF (292 aa)) folds into the Protein kinase domain. ATP-binding positions include 19–27 (VGKGSYGVV) and lysine 42. Aspartate 139 (proton acceptor) is an active-site residue. At threonine 175 the chain carries Phosphothreonine. Residues 175–177 (TDY) carry the TXY motif. At tyrosine 177 the chain carries Phosphotyrosine. The disordered stretch occupies residues 384 to 421 (YSRGERSTPLRRQHASLPRERVCSSVDSNNQDSDNEER).

The protein belongs to the protein kinase superfamily. CMGC Ser/Thr protein kinase family. MAP kinase subfamily. Dually phosphorylated on Thr-175 and Tyr-177, which activates the enzyme.

The catalysed reaction is L-seryl-[protein] + ATP = O-phospho-L-seryl-[protein] + ADP + H(+). It carries out the reaction L-threonyl-[protein] + ATP = O-phospho-L-threonyl-[protein] + ADP + H(+). Activated by threonine and tyrosine phosphorylation. This chain is Mitogen-activated protein kinase 13 (MPK13), found in Oryza sativa subsp. indica (Rice).